The following is a 103-amino-acid chain: Co-chaperonin GroES (103 aa).

Belongs to the GroES chaperonin family. As to quaternary structure, heptamer of 7 subunits arranged in a ring. Interacts with the chaperonin GroEL.

The protein resides in the cytoplasm. In terms of biological role, together with the chaperonin GroEL, plays an essential role in assisting protein folding. The GroEL-GroES system forms a nano-cage that allows encapsulation of the non-native substrate proteins and provides a physical environment optimized to promote and accelerate protein folding. GroES binds to the apical surface of the GroEL ring, thereby capping the opening of the GroEL channel. The polypeptide is Co-chaperonin GroES (Gloeothece citriformis (strain PCC 7424) (Cyanothece sp. (strain PCC 7424))).